Consider the following 364-residue polypeptide: Mannonate dehydratase (364 aa).

This sequence belongs to the mannonate dehydratase family. Fe(2+) serves as cofactor. It depends on Mn(2+) as a cofactor.

The enzyme catalyses D-mannonate = 2-dehydro-3-deoxy-D-gluconate + H2O. Its pathway is carbohydrate metabolism; pentose and glucuronate interconversion. Its function is as follows. Catalyzes the dehydration of D-mannonate. The chain is Mannonate dehydratase from Streptococcus equi subsp. zooepidemicus (strain MGCS10565).